We begin with the raw amino-acid sequence, 495 residues long: UDP-glycosyltransferase 73C12 (495 aa).

The active-site Proton acceptor is His24. Position 24 (His24) interacts with an anthocyanidin. Asp129 (charge relay) is an active-site residue. The UDP-alpha-D-glucose site is built by Ala356, Gln358, His373, Trp376, Asn377, Ser378, and Glu381. Residue Ala396 participates in an anthocyanidin binding. Asp397 and Gln398 together coordinate UDP-alpha-D-glucose.

It belongs to the UDP-glycosyltransferase family.

It catalyses the reaction oleanolate + UDP-alpha-D-glucose = oleanolate 3-O-beta-D-glucoside + UDP + H(+). Catalyzes the transfer of a glucose (Glc) moiety from UDP-Glc to the C-3 position of the oleanane sapogenins oleanolate and hederagenin, and to the C-28 carboxylic group of the lupane sapogenin betulinate. The monoglucosylated hederagenin 3-O-beta-D-glucoside is a feeding deterrent of the yellow-striped flea beetle (Phyllotreta nemorum). This Barbarea vulgaris (Yellow rocket) protein is UDP-glycosyltransferase 73C12.